A 297-amino-acid polypeptide reads, in one-letter code: Juvenile hormone acid O-methyltransferase (297 aa).

Belongs to the methyltransferase superfamily. Predominantly expressed in corpora allata. Also expressed at low level in testis.

It carries out the reaction (2E,6E)-farnesoate + S-adenosyl-L-methionine = methyl (2E,6E)-farnesoate + S-adenosyl-L-homocysteine. It catalyses the reaction juvenile hormone III carboxylate + S-adenosyl-L-methionine = juvenile hormone III + S-adenosyl-L-homocysteine. Functionally, O-methyltransferase that transfers a methyl group from S-adenosyl-L-methionine (SAM) to the carboxyl group of juvenile hormone acids to produce active juvenile hormones in the corpora allata, the last step during juvenile hormone biosynthesis. Also able to methylate farnesoate to methyl farnesoate. The protein is Juvenile hormone acid O-methyltransferase of Drosophila melanogaster (Fruit fly).